The sequence spans 514 residues: Cytochrome P450 monooxygenase verB (514 aa).

The chain crosses the membrane as a helical span at residues 5 to 25; sequence WLSASVLITAVILLVDYLNYY. Position 457 (Cys-457) interacts with heme.

It belongs to the cytochrome P450 family. The cofactor is heme.

The protein localises to the membrane. It participates in mycotoxin biosynthesis. In terms of biological role, cytochrome P450 monooxygenase; part of the gene cluster that mediates the biosynthesis of 11'-deoxyverticillin A, one of the dimeric epipolythiodioxopiperazines (ETPs) from the verticillin family that act as mycotoxins. 11'-deoxyverticillin A is required for normal conidiation. The nonribosomal peptide synthetase verP is speculated to be responsible for condensation of amino acids to form the carbon skeleton of verticillin, whereas the cluster-specific tailoring enzymes are involved in further modifications leading to the production of 11'-deoxyverticillin A. The polypeptide is Cytochrome P450 monooxygenase verB (Clonostachys rogersoniana).